Reading from the N-terminus, the 271-residue chain is NAD kinase (271 aa).

Asp52 acts as the Proton acceptor in catalysis. Residues 52 to 53 (DG), 129 to 130 (NE), Arg155, Asp157, and Ala192 contribute to the NAD(+) site.

Belongs to the NAD kinase family. The cofactor is a divalent metal cation.

It is found in the cytoplasm. The catalysed reaction is NAD(+) + ATP = ADP + NADP(+) + H(+). Functionally, involved in the regulation of the intracellular balance of NAD and NADP, and is a key enzyme in the biosynthesis of NADP. Catalyzes specifically the phosphorylation on 2'-hydroxyl of the adenosine moiety of NAD to yield NADP. The polypeptide is NAD kinase (Geobacillus stearothermophilus (Bacillus stearothermophilus)).